A 158-amino-acid polypeptide reads, in one-letter code: E3 ubiquitin ligase complex SCF subunit sconC (158 aa).

The interval 100–158 (ILAANYLDIKALLDVGCKTVANMIKGKSPEEIRKTFNIQNDFTPEEEDQIRRENEWAEE) is interaction with the F-box domain of F-box proteins.

Belongs to the SKP1 family. Component of the SCF (SKP1-CUL1-F-box protein) E3 ubiquitin ligase complexes.

Its pathway is protein modification; protein ubiquitination. Functionally, essential component of the SCF (SKP1-CUL1-F-box protein) E3 ubiquitin ligase complexes, which mediate the ubiquitination and subsequent proteasomal degradation of target proteins. Controls sulfur metabolite repression, probably by mediating the inactivation or degradation of the metR transcription factor. This Aspergillus fumigatus (strain CBS 144.89 / FGSC A1163 / CEA10) (Neosartorya fumigata) protein is E3 ubiquitin ligase complex SCF subunit sconC (sconC).